A 736-amino-acid polypeptide reads, in one-letter code: MKNEPKITPELVAAHGLKPDEYERILKLIGREPTFTELGIFSAMWNEHCSYKSSRIHLRGLPTKAPWVIQGPGENAGVIDIGDGQAVVFKMESHNHPSYIEPYQGATTGVGGILRDVFTMGARPIACLNALSFGAPEHAKTRHLVSGVVAGVGGYGNSFGVPTVGGQVRFHTRYDGNILVNAMAVGLADADKIFYAAASGVNMPIVYLGSKTGRDGIHGASMASAEFDDKSEEKRPTVQVGDPFAEKLLLEACLEIMEKGCVIAIQDMGAAGLTCSAVEMGAKGDLGVDLDLDAVPTRETGMSAYEMMLSESQERMLMVLKPEKEKEAEAIFKKWGLDFAVVGYTTPSKRFVVKHGGDVMADLPIKELGDEAPLYDRPHVPSAALPVVHAREVMAPMGVGSALEKLIGTPDMCSKRWVWEQYDHVILGNTMQRPGGDAAVVRVQDGPKGLALTVDVTPRYCEADPFEGGKQAVAEAWRNITAVGGKPLAITDNLNFGNPERPEIMGQFVGCLKGISEACRTLDFPVVSGNVSLYNETNGRAILPTPSIGGVGLLDDFTKSASLAFKAEGEAILLIGETHGWLGQSVYLRDICGREEGAPPPVDLAAEKRNGDCVRGMIHAGTATAVHDLSDGGLLIALAEMAMASGIGAKLLAAPTSLVSQAYWFGEDQARYLVTVPETEAGRVLAKMRGCEVPCVRIGTTGGDAIAIAGEAPVTIDKLRTSFERWLPEYMGGKAA.

The active site involves histidine 48. ATP is bound by residues tyrosine 51 and lysine 90. Residue glutamate 92 participates in Mg(2+) binding. Substrate-binding positions include 93 to 96 (SHNH) and arginine 115. Residue histidine 94 is the Proton acceptor of the active site. A Mg(2+)-binding site is contributed by aspartate 116. Glutamine 239 serves as a coordination point for substrate. Aspartate 267 serves as a coordination point for Mg(2+). 311 to 313 (ESQ) contacts substrate. ATP is bound by residues aspartate 492 and glycine 529. Asparagine 530 provides a ligand contact to Mg(2+). Residue serine 532 participates in substrate binding.

It belongs to the FGAMS family. In terms of assembly, monomer. Part of the FGAM synthase complex composed of 1 PurL, 1 PurQ and 2 PurS subunits.

The protein resides in the cytoplasm. It carries out the reaction N(2)-formyl-N(1)-(5-phospho-beta-D-ribosyl)glycinamide + L-glutamine + ATP + H2O = 2-formamido-N(1)-(5-O-phospho-beta-D-ribosyl)acetamidine + L-glutamate + ADP + phosphate + H(+). It participates in purine metabolism; IMP biosynthesis via de novo pathway; 5-amino-1-(5-phospho-D-ribosyl)imidazole from N(2)-formyl-N(1)-(5-phospho-D-ribosyl)glycinamide: step 1/2. In terms of biological role, part of the phosphoribosylformylglycinamidine synthase complex involved in the purines biosynthetic pathway. Catalyzes the ATP-dependent conversion of formylglycinamide ribonucleotide (FGAR) and glutamine to yield formylglycinamidine ribonucleotide (FGAM) and glutamate. The FGAM synthase complex is composed of three subunits. PurQ produces an ammonia molecule by converting glutamine to glutamate. PurL transfers the ammonia molecule to FGAR to form FGAM in an ATP-dependent manner. PurS interacts with PurQ and PurL and is thought to assist in the transfer of the ammonia molecule from PurQ to PurL. This Bradyrhizobium diazoefficiens (strain JCM 10833 / BCRC 13528 / IAM 13628 / NBRC 14792 / USDA 110) protein is Phosphoribosylformylglycinamidine synthase subunit PurL.